Here is a 1019-residue protein sequence, read N- to C-terminus: Photoactivated adenylate cyclase subunit alpha (1019 aa).

Residues 55-148 (LRRLMYLSAS…GRMYGEWHMK (94 aa)) enclose the BLUF 1 domain. The 129-residue stretch at 204 to 332 (VVTFIYLVEF…DCINTASRIT (129 aa)) folds into the Guanylate cyclase 1 domain. Residues 467–559 (LITLTYISQA…RVYGSPLDMT (93 aa)) enclose the BLUF 2 domain. A Guanylate cyclase 2 domain is found at 615 to 744 (VMLATDICSF…EVSARVMEVE (130 aa)). The disordered stretch occupies residues 822 to 861 (GTNAPGRGAPAGGIPSSPKVRPPGRTNSVSSYTPDPNEAL). Over residues 825-839 (APGRGAPAGGIPSSP) the composition is skewed to low complexity. Residues 846–855 (RTNSVSSYTP) show a composition bias toward polar residues.

This sequence belongs to the adenylyl cyclase class-4/guanylyl cyclase family. In terms of assembly, heterotetramer of two alpha and two beta subunits. The cofactor is FAD.

The protein resides in the cell projection. It localises to the cilium. The protein localises to the flagellum. It catalyses the reaction ATP = 3',5'-cyclic AMP + diphosphate. Its activity is regulated as follows. Activity increased by up to 80-fold under blue light. Acts as a blue light photoreceptor for the step-up photophobic response. Mediates photoavoidance. The chain is Photoactivated adenylate cyclase subunit alpha from Euglena gracilis.